We begin with the raw amino-acid sequence, 389 residues long: UDP-N-acetylglucosamine--N-acetylmuramyl-(pentapeptide) pyrophosphoryl-undecaprenol N-acetylglucosamine transferase (389 aa).

UDP-N-acetyl-alpha-D-glucosamine is bound by residues 17-19, N137, R179, S213, and Q308; that span reads TAG.

It belongs to the glycosyltransferase 28 family. MurG subfamily.

The protein resides in the cell membrane. It carries out the reaction di-trans,octa-cis-undecaprenyl diphospho-N-acetyl-alpha-D-muramoyl-L-alanyl-D-glutamyl-meso-2,6-diaminopimeloyl-D-alanyl-D-alanine + UDP-N-acetyl-alpha-D-glucosamine = di-trans,octa-cis-undecaprenyl diphospho-[N-acetyl-alpha-D-glucosaminyl-(1-&gt;4)]-N-acetyl-alpha-D-muramoyl-L-alanyl-D-glutamyl-meso-2,6-diaminopimeloyl-D-alanyl-D-alanine + UDP + H(+). Its pathway is cell wall biogenesis; peptidoglycan biosynthesis. Cell wall formation. Catalyzes the transfer of a GlcNAc subunit on undecaprenyl-pyrophosphoryl-MurNAc-pentapeptide (lipid intermediate I) to form undecaprenyl-pyrophosphoryl-MurNAc-(pentapeptide)GlcNAc (lipid intermediate II). This is UDP-N-acetylglucosamine--N-acetylmuramyl-(pentapeptide) pyrophosphoryl-undecaprenol N-acetylglucosamine transferase from Rhodococcus erythropolis (strain PR4 / NBRC 100887).